A 549-amino-acid polypeptide reads, in one-letter code: Glucose-6-phosphate isomerase (549 aa).

Glu355 functions as the Proton donor in the catalytic mechanism. Residues His386 and Lys514 contribute to the active site.

The protein belongs to the GPI family.

It is found in the cytoplasm. It carries out the reaction alpha-D-glucose 6-phosphate = beta-D-fructose 6-phosphate. Its pathway is carbohydrate biosynthesis; gluconeogenesis. It participates in carbohydrate degradation; glycolysis; D-glyceraldehyde 3-phosphate and glycerone phosphate from D-glucose: step 2/4. Functionally, catalyzes the reversible isomerization of glucose-6-phosphate to fructose-6-phosphate. This chain is Glucose-6-phosphate isomerase, found in Salmonella enteritidis PT4 (strain P125109).